The primary structure comprises 425 residues: ATP-dependent RNA helicase RhlB (425 aa).

The Q motif signature appears at 9–37; that stretch reads TRFADLALHPKIQQAISSAGFEYCTPIQA. The 179-residue stretch at 40–218 folds into the Helicase ATP-binding domain; sequence LPVALSNRDV…YEHMNAPTKL (179 aa). Residue 53–60 participates in ATP binding; that stretch reads AQTGTGKT. Positions 164–167 match the DEAD box motif; that stretch reads DEAD. The Helicase C-terminal domain occupies 242–389; that stretch reads KFPLLLTLIE…VTKYDGDALL (148 aa). Residues 391 to 425 are disordered; it reads DLRRPRPIQRRRRHNSGGGKGKPRGRRSGPPRNAS. Residues 395–419 show a composition bias toward basic residues; the sequence is PRPIQRRRRHNSGGGKGKPRGRRSG.

Belongs to the DEAD box helicase family. RhlB subfamily. Component of the RNA degradosome, which is a multiprotein complex involved in RNA processing and mRNA degradation.

The protein resides in the cytoplasm. The catalysed reaction is ATP + H2O = ADP + phosphate + H(+). In terms of biological role, DEAD-box RNA helicase involved in RNA degradation. Has RNA-dependent ATPase activity and unwinds double-stranded RNA. The chain is ATP-dependent RNA helicase RhlB from Idiomarina loihiensis (strain ATCC BAA-735 / DSM 15497 / L2-TR).